The following is a 576-amino-acid chain: Sodium/hydrogen exchanger 8 (576 aa).

The next 11 helical transmembrane spans lie at 55-75 (MTIF…HLLI), 79-99 (LHFL…GAVI), 118-138 (PNMF…YSLH), 151-171 (LFAV…IYFL), 186-206 (FAFG…IFNA), 256-276 (LGYF…TGLI), 306-326 (GLAE…GIVM), 349-369 (VAFL…FSFP), 374-394 (ISFV…NIFP), 412-432 (MFIM…SLHL), and 446-466 (TTIV…MPLI). Thr-505 is subject to Phosphothreonine. 2 positions are modified to phosphoserine: Ser-566 and Ser-568.

Belongs to the monovalent cation:proton antiporter 1 (CPA1) transporter (TC 2.A.36) family. Predominantly expressed in the liver, skeletal muscle, kidney, and testis. Expressed in both renal cortex and medulla. Detected throughout the entire gastrointestinal tract, with high expression detected in stomach, duodenum and ascending colon. In gastric epithelium; expressed in the glands within the fundus and pylorus regions.

It is found in the golgi apparatus membrane. Its subcellular location is the golgi apparatus. It localises to the trans-Golgi network membrane. The protein localises to the endosome. The protein resides in the multivesicular body membrane. It is found in the apical cell membrane. Its subcellular location is the cytoplasmic vesicle. It localises to the secretory vesicle. The protein localises to the acrosome. It catalyses the reaction Na(+)(in) + H(+)(out) = Na(+)(out) + H(+)(in). Na(+)/H(+) antiporter. Mediates the electoneutral exchange of intracellular H(+) ions for extracellular Na(+) in 1:1 stoichiometry. Acts as an Na(+)/H(+) exchanger in the trans-Golgi. Contributes to the regulation of pH regulation of Golgi apparatus, and consequently, in protein trafficking and endosomal morphology. Plays a crucial role in germ cells in acrosome biogenesis and sperm development, probably by playing a role in the fusion of the Golgi-derived vesicles that form the acrosomal cap. Can also be active at the cell surface of specialized cells. In the small intestine, plays a major physiological role in transepithelial absorption of Na(+). Regulates intracellular pH homeostasis of intestinal epithelial cells. Acts as an important regulator of mucosal integrity in the intestine and in the stomach, could mediate the pH fluctuation necessary for mucin exocytosis or assist membrane trafficking of other proteins. Plays a role in photoreceptor survival and in the maintenance of intracellular pH homeostasis in retinal pigment epithelium (RPE cells). The sequence is that of Sodium/hydrogen exchanger 8 (Slc9a8) from Mus musculus (Mouse).